The chain runs to 151 residues: Ribosome maturation factor RimP (151 aa).

This sequence belongs to the RimP family.

It localises to the cytoplasm. Required for maturation of 30S ribosomal subunits. The sequence is that of Ribosome maturation factor RimP from Caldanaerobacter subterraneus subsp. tengcongensis (strain DSM 15242 / JCM 11007 / NBRC 100824 / MB4) (Thermoanaerobacter tengcongensis).